A 494-amino-acid polypeptide reads, in one-letter code: UDP-N-acetylmuramate--L-alanine ligase (494 aa).

Residue 140 to 146 coordinates ATP; the sequence is GTHGKTT.

Belongs to the MurCDEF family.

It localises to the cytoplasm. It catalyses the reaction UDP-N-acetyl-alpha-D-muramate + L-alanine + ATP = UDP-N-acetyl-alpha-D-muramoyl-L-alanine + ADP + phosphate + H(+). It functions in the pathway cell wall biogenesis; peptidoglycan biosynthesis. Its function is as follows. Cell wall formation. In Nostoc sp. (strain PCC 7120 / SAG 25.82 / UTEX 2576), this protein is UDP-N-acetylmuramate--L-alanine ligase.